The chain runs to 243 residues: Probable 6-oxopurine nucleoside phosphorylase (243 aa).

Residues threonine 8 and 48 to 49 contribute to the phosphate site; that span reads RH. Methionine 174 provides a ligand contact to substrate. A phosphate-binding site is contributed by threonine 175. A substrate-binding site is contributed by 198 to 200; the sequence is NYA.

Belongs to the PNP/MTAP phosphorylase family. MTAP subfamily. Homohexamer. Dimer of a homotrimer.

The enzyme catalyses a purine D-ribonucleoside + phosphate = a purine nucleobase + alpha-D-ribose 1-phosphate. Its pathway is purine metabolism; purine nucleoside salvage. In terms of biological role, purine nucleoside phosphorylase which is highly specific for 6-oxopurine nucleosides. Cleaves guanosine or inosine to respective bases and sugar-1-phosphate molecules. Involved in purine salvage. In Archaeoglobus fulgidus (strain ATCC 49558 / DSM 4304 / JCM 9628 / NBRC 100126 / VC-16), this protein is Probable 6-oxopurine nucleoside phosphorylase.